The chain runs to 599 residues: UvrABC system protein C (599 aa).

One can recognise a GIY-YIG domain in the interval 15–93 (EKPGCYQYFD…IKEYQPRYNV (79 aa)). Positions 207–242 (HRLVRMYRDRMQVYSEGLRFEEAQICKERIELLERY) constitute a UVR domain.

This sequence belongs to the UvrC family. As to quaternary structure, interacts with UvrB in an incision complex.

It is found in the cytoplasm. Functionally, the UvrABC repair system catalyzes the recognition and processing of DNA lesions. UvrC both incises the 5' and 3' sides of the lesion. The N-terminal half is responsible for the 3' incision and the C-terminal half is responsible for the 5' incision. The sequence is that of UvrABC system protein C from Porphyromonas gingivalis (strain ATCC BAA-308 / W83).